Consider the following 267-residue polypeptide: Diphthine--ammonia ligase (267 aa).

Y97 is subject to Phosphotyrosine.

This sequence belongs to the Diphthine--ammonia ligase family.

It catalyses the reaction diphthine-[translation elongation factor 2] + NH4(+) + ATP = diphthamide-[translation elongation factor 2] + AMP + diphosphate + H(+). The protein operates within protein modification; peptidyl-diphthamide biosynthesis. Its function is as follows. Amidase that catalyzes the last step of diphthamide biosynthesis using ammonium and ATP. Diphthamide biosynthesis consists in the conversion of an L-histidine residue in the translation elongation factor eEF-2 (EEF2) to diphthamide. The protein is Diphthine--ammonia ligase (DPH6) of Bos taurus (Bovine).